The chain runs to 78 residues: U-scoloptoxin(04)-Er1d (78 aa).

The N-terminal stretch at 1 to 24 is a signal peptide; the sequence is MTRHLIFAAMLLVCLFVCWNAVGA. A propeptide spanning residues 25 to 28 is cleaved from the precursor; the sequence is RDAR.

It belongs to the scoloptoxin-04 family. Post-translationally, contains 2 disulfide bonds. As to expression, expressed by the venom gland.

It is found in the secreted. The polypeptide is U-scoloptoxin(04)-Er1d (Ethmostigmus rubripes (Giant centipede)).